We begin with the raw amino-acid sequence, 209 residues long: MGKVYVFDHPLIQHKLTYIRDKNTGTKEFRELVDEVATLMAFEITRDLPLEEVEIETPVSKARAKVIAGKKLGVIPILRAGIGMVDGILKLIPAAKVGHIGLYRDPQTLKPVEYYVKLPSDVEERDFIIVDPMLATGGSAVAAIDALKKRGAKSIKFMCLIAAPGRVKAVETAHPDVDIYIAALDERLNDHGYIVPGLGDAGDRLFGTK.

Residues R79, R104, and 131 to 139 contribute to the 5-phospho-alpha-D-ribose 1-diphosphate site; that span reads DPMLATGGS. Uracil contacts are provided by residues I194 and 199–201; that span reads GDA. Residue D200 participates in 5-phospho-alpha-D-ribose 1-diphosphate binding.

It belongs to the UPRTase family. In terms of assembly, homodimer. Mg(2+) serves as cofactor.

The catalysed reaction is UMP + diphosphate = 5-phospho-alpha-D-ribose 1-diphosphate + uracil. It functions in the pathway pyrimidine metabolism; UMP biosynthesis via salvage pathway; UMP from uracil: step 1/1. Its activity is regulated as follows. Allosterically activated by GTP. In terms of biological role, catalyzes the conversion of uracil and 5-phospho-alpha-D-ribose 1-diphosphate (PRPP) to UMP and diphosphate. In Bacillus caldolyticus, this protein is Uracil phosphoribosyltransferase.